A 99-amino-acid polypeptide reads, in one-letter code: A-type ATP synthase subunit F (99 aa).

The protein belongs to the V-ATPase F subunit family. As to quaternary structure, has multiple subunits with at least A(3), B(3), C, D, E, F, H, I and proteolipid K(x).

The protein localises to the cell membrane. In terms of biological role, component of the A-type ATP synthase that produces ATP from ADP in the presence of a proton gradient across the membrane. The sequence is that of A-type ATP synthase subunit F from Methanococcus maripaludis (strain C7 / ATCC BAA-1331).